We begin with the raw amino-acid sequence, 287 residues long: Energy-coupling factor transporter ATP-binding protein EcfA2 (287 aa).

An ABC transporter domain is found at 3 to 245 (IKFENVSYVY…SEWLQKHHLA (243 aa)). 40 to 47 (GHTGSGKS) contributes to the ATP binding site.

The protein belongs to the ABC transporter superfamily. Energy-coupling factor EcfA family. In terms of assembly, forms a stable energy-coupling factor (ECF) transporter complex composed of 2 membrane-embedded substrate-binding proteins (S component), 2 ATP-binding proteins (A component) and 2 transmembrane proteins (T component).

Its subcellular location is the cell membrane. ATP-binding (A) component of a common energy-coupling factor (ECF) ABC-transporter complex. Unlike classic ABC transporters this ECF transporter provides the energy necessary to transport a number of different substrates. This chain is Energy-coupling factor transporter ATP-binding protein EcfA2, found in Lactobacillus delbrueckii subsp. bulgaricus (strain ATCC 11842 / DSM 20081 / BCRC 10696 / JCM 1002 / NBRC 13953 / NCIMB 11778 / NCTC 12712 / WDCM 00102 / Lb 14).